The primary structure comprises 202 residues: Nucleoid occlusion factor SlmA (202 aa).

Positions 14 to 75 (KERQQQVLEV…ALIERIEQTL (62 aa)) constitute an HTH tetR-type domain. The segment at residues 38 to 57 (TTERLAKAVGVSEGALYRYF) is a DNA-binding region (H-T-H motif).

This sequence belongs to the nucleoid occlusion factor SlmA family. Homodimer. Interacts with FtsZ.

Its subcellular location is the cytoplasm. The protein localises to the nucleoid. Required for nucleoid occlusion (NO) phenomenon, which prevents Z-ring formation and cell division over the nucleoid. Acts as a DNA-associated cell division inhibitor that binds simultaneously chromosomal DNA and FtsZ, and disrupts the assembly of FtsZ polymers. SlmA-DNA-binding sequences (SBS) are dispersed on non-Ter regions of the chromosome, preventing FtsZ polymerization at these regions. This Actinobacillus pleuropneumoniae serotype 5b (strain L20) protein is Nucleoid occlusion factor SlmA.